The primary structure comprises 469 residues: Ribosomal protein uS12 methylthiotransferase RimO (469 aa).

The 111-residue stretch at 34–144 folds into the MTTase N-terminal domain; that stretch reads NKIGFVSLGC…VLEHVHQFAP (111 aa). Positions 43, 79, 108, 176, 180, and 183 each coordinate [4Fe-4S] cluster. A Radical SAM core domain is found at 162–399; sequence LTPKHYAYLK…MLVQQEISAA (238 aa). The region spanning 402-468 is the TRAM domain; the sequence is QKRIGSTMKV…EYDLWGSLVR (67 aa).

This sequence belongs to the methylthiotransferase family. RimO subfamily. Requires [4Fe-4S] cluster as cofactor.

It is found in the cytoplasm. The catalysed reaction is L-aspartate(89)-[ribosomal protein uS12]-hydrogen + (sulfur carrier)-SH + AH2 + 2 S-adenosyl-L-methionine = 3-methylsulfanyl-L-aspartate(89)-[ribosomal protein uS12]-hydrogen + (sulfur carrier)-H + 5'-deoxyadenosine + L-methionine + A + S-adenosyl-L-homocysteine + 2 H(+). Catalyzes the methylthiolation of an aspartic acid residue of ribosomal protein uS12. This is Ribosomal protein uS12 methylthiotransferase RimO from Vibrio vulnificus (strain YJ016).